We begin with the raw amino-acid sequence, 95 residues long: Signal recognition particle 19 kDa protein (95 aa).

The protein belongs to the SRP19 family. As to quaternary structure, part of the signal recognition particle protein translocation system, which is composed of SRP and FtsY. Archaeal SRP consists of a 7S RNA molecule of 300 nucleotides and two protein subunits: SRP54 and SRP19.

The protein resides in the cytoplasm. Involved in targeting and insertion of nascent membrane proteins into the cytoplasmic membrane. Binds directly to 7S RNA and mediates binding of the 54 kDa subunit of the SRP. The sequence is that of Signal recognition particle 19 kDa protein from Pyrobaculum islandicum (strain DSM 4184 / JCM 9189 / GEO3).